Consider the following 258-residue polypeptide: Regulatory protein RecX (258 aa).

It belongs to the RecX family.

The protein resides in the cytoplasm. Modulates RecA activity. This Streptococcus thermophilus (strain ATCC BAA-491 / LMD-9) protein is Regulatory protein RecX.